The sequence spans 482 residues: BTB/POZ domain-containing protein 6-B (482 aa).

Positions 80–150 (ADVHFVVGPP…MYSDEIELEA (71 aa)) constitute a BTB domain.

As to quaternary structure, interacts with cul3. Interacts (via BTB domain) with zbtb16/plzf. In terms of tissue distribution, in embryos, expressed in the cranial ganglia.

The protein resides in the cytoplasm. It is found in the nucleus. Its function is as follows. Adapter protein for the cul3 E3 ubiquitin-protein ligase complex. Promotes the export of zbtb16/plzf from the nucleus to the cytoplasm and targets zbtb16/plzf for ubiquitination and degradation. Up-regulates neurog1 expression and antagonizes zbtb16/plzf, to promote neurogenesis. The sequence is that of BTB/POZ domain-containing protein 6-B (btbd6b) from Danio rerio (Zebrafish).